The primary structure comprises 198 residues: Recombination protein RecR (198 aa).

The C4-type zinc finger occupies 57–72 (CSVCGHITDQDPCYIC). Positions 80–175 (SVICVVQDPK…KLSRIAHGLP (96 aa)) constitute a Toprim domain.

Belongs to the RecR family.

In terms of biological role, may play a role in DNA repair. It seems to be involved in an RecBC-independent recombinational process of DNA repair. It may act with RecF and RecO. In Bacillus pumilus (strain SAFR-032), this protein is Recombination protein RecR.